A 155-amino-acid chain; its full sequence is Nuclear cap-binding protein subunit 2 (155 aa).

MRNA-binding positions include Tyr-19, Tyr-42, 111 to 115, 122 to 126, and 132 to 133; these read RTDWD, RQYGR, and QV. The RRM domain occupies 39–117; that stretch reads ATLYVGNLSF…RIIRTDWDAG (79 aa). Residues 121-155 form a disordered region; that stretch reads GRQYGRGKSGGQVRDEYRQDYDPARGGYGKMVQKS. The segment covering 133–143 has biased composition (basic and acidic residues); that stretch reads VRDEYRQDYDP.

This sequence belongs to the RRM NCBP2 family. In terms of assembly, component of the nuclear cap-binding complex (CBC), a heterodimer composed of ncbp1/cbp80 and ncbp2/cbp20 that interacts with m7GpppG-capped RNA.

The protein localises to the nucleus. It is found in the cytoplasm. Component of the cap-binding complex (CBC), which binds co-transcriptionally to the 5' cap of pre-mRNAs and is involved in various processes such as pre-mRNA splicing, translation regulation, nonsense-mediated mRNA decay, RNA-mediated gene silencing (RNAi) by microRNAs (miRNAs) and mRNA export. The CBC complex is involved in mRNA export from the nucleus, leading to the recruitment of the mRNA export machinery to the 5' end of mRNA and to mRNA export in a 5' to 3' direction through the nuclear pore. The CBC complex is also involved in mediating U snRNA and intronless mRNAs export from the nucleus. The CBC complex is essential for a pioneer round of mRNA translation, before steady state translation when the CBC complex is replaced by cytoplasmic cap-binding protein eIF4E. The pioneer round of mRNA translation mediated by the CBC complex plays a central role in nonsense-mediated mRNA decay (NMD), NMD only taking place in mRNAs bound to the CBC complex, but not on eIF4E-bound mRNAs. The CBC complex enhances NMD in mRNAs containing at least one exon-junction complex (EJC), promoting the interaction between upf1 and upf2. The CBC complex is also involved in 'failsafe' NMD, which is independent of the EJC complex, while it does not participate in Staufen-mediated mRNA decay (SMD). During cell proliferation, the CBC complex is also involved in microRNAs (miRNAs) biogenesis via its interaction with srrt/ars2, thereby being required for miRNA-mediated RNA interference. The CBC complex also acts as a negative regulator of parn, thereby acting as an inhibitor of mRNA deadenylation. In the CBC complex, ncbp2/cbp20 recognizes and binds capped RNAs (m7GpppG-capped RNA) but requires ncbp1/cbp80 to stabilize the movement of its N-terminal loop and lock the CBC into a high affinity cap-binding state with the cap structure. The conventional cap-binding complex with NCBP2 binds both small nuclear RNA (snRNA) and messenger (mRNA) and is involved in their export from the nucleus. This is Nuclear cap-binding protein subunit 2 (ncbp2) from Danio rerio (Zebrafish).